The chain runs to 105 residues: Protein LBH (105 aa).

An LBH domain is found at 18 to 104; sequence MTEVMMNTQP…CEETAKENKE (87 aa). Phosphoserine is present on Ser63. Residues 86-96 show a composition bias toward acidic residues; it reads LVQEDEQDNCE. The interval 86 to 105 is disordered; that stretch reads LVQEDEQDNCEETAKENKEQ.

The protein belongs to the LBH family. In terms of tissue distribution, highly expressed in heart, and expressed at low levels in placenta, lung, skeletal muscle, kidney and liver.

It localises to the nucleus. Its subcellular location is the cytoplasm. Its function is as follows. Transcriptional activator which may act in mitogen-activated protein kinase signaling pathway. The polypeptide is Protein LBH (Homo sapiens (Human)).